A 192-amino-acid polypeptide reads, in one-letter code: tRNA (cytidine(56)-2'-O)-methyltransferase (192 aa).

S-adenosyl-L-methionine-binding positions include leucine 84 and 112 to 116 (GGEKV).

Belongs to the aTrm56 family. As to quaternary structure, homodimer.

The protein resides in the cytoplasm. The enzyme catalyses cytidine(56) in tRNA + S-adenosyl-L-methionine = 2'-O-methylcytidine(56) in tRNA + S-adenosyl-L-homocysteine + H(+). Functionally, specifically catalyzes the AdoMet-dependent 2'-O-ribose methylation of cytidine at position 56 in tRNAs. The chain is tRNA (cytidine(56)-2'-O)-methyltransferase from Halobacterium salinarum (strain ATCC 700922 / JCM 11081 / NRC-1) (Halobacterium halobium).